Consider the following 263-residue polypeptide: HTH-type transcriptional repressor NanR (263 aa).

A disordered region spans residues 1–22 (MGLMNAFDSQTEDSSPAIGRNL). Positions 30–98 (KKLSEMVEEE…NGERARVSRP (69 aa)) constitute an HTH gntR-type domain. The H-T-H motif DNA-binding region spans 58-77 (ERELMAFFNVGRPSVREALA).

Belongs to the NanR family.

Functionally, transcriptional repressor that controls expression of the genes required for the catabolism of sialic acids. This is HTH-type transcriptional repressor NanR from Shigella dysenteriae serotype 1 (strain Sd197).